Consider the following 906-residue polypeptide: Protein translocase subunit SecA (906 aa).

Residues Gln89, 107-111 (GEGKT), and Asp502 contribute to the ATP site. The Zn(2+) site is built by Cys890, Cys892, Cys901, and His902.

Belongs to the SecA family. As to quaternary structure, monomer and homodimer. Part of the essential Sec protein translocation apparatus which comprises SecA, SecYEG and auxiliary proteins SecDF-YajC and YidC. Zn(2+) serves as cofactor.

It localises to the cell inner membrane. The protein resides in the cytoplasm. It carries out the reaction ATP + H2O + cellular proteinSide 1 = ADP + phosphate + cellular proteinSide 2.. Its function is as follows. Part of the Sec protein translocase complex. Interacts with the SecYEG preprotein conducting channel. Has a central role in coupling the hydrolysis of ATP to the transfer of proteins into and across the cell membrane, serving both as a receptor for the preprotein-SecB complex and as an ATP-driven molecular motor driving the stepwise translocation of polypeptide chains across the membrane. This is Protein translocase subunit SecA from Brucella suis biovar 1 (strain 1330).